The primary structure comprises 153 residues: Large ribosomal subunit protein uL13 (153 aa).

The protein belongs to the universal ribosomal protein uL13 family. As to quaternary structure, part of the 50S ribosomal subunit.

In terms of biological role, this protein is one of the early assembly proteins of the 50S ribosomal subunit, although it is not seen to bind rRNA by itself. It is important during the early stages of 50S assembly. The polypeptide is Large ribosomal subunit protein uL13 (Chelativorans sp. (strain BNC1)).